The primary structure comprises 430 residues: Adenylosuccinate synthetase (430 aa).

Residues 13–19 and 41–43 contribute to the GTP site; these read GDEGKGK and GHT. Residue aspartate 14 is the Proton acceptor of the active site. Mg(2+) is bound by residues aspartate 14 and glycine 41. Residues 14–17, 39–42, threonine 130, arginine 144, glutamine 225, threonine 240, and arginine 304 each bind IMP; these read DEGK and NAGH. The active-site Proton donor is histidine 42. 300-306 contacts substrate; the sequence is ATTGRKR. Residues arginine 306, 332-334, and 414-416 each bind GTP; these read KLD and STG.

It belongs to the adenylosuccinate synthetase family. Homodimer. Mg(2+) is required as a cofactor.

Its subcellular location is the cytoplasm. It carries out the reaction IMP + L-aspartate + GTP = N(6)-(1,2-dicarboxyethyl)-AMP + GDP + phosphate + 2 H(+). The protein operates within purine metabolism; AMP biosynthesis via de novo pathway; AMP from IMP: step 1/2. Plays an important role in the de novo pathway of purine nucleotide biosynthesis. Catalyzes the first committed step in the biosynthesis of AMP from IMP. The chain is Adenylosuccinate synthetase from Teredinibacter turnerae (strain ATCC 39867 / T7901).